Reading from the N-terminus, the 399-residue chain is Carbamoyl phosphate synthase small chain (399 aa).

Residues 1–206 (MTQTIPSPKP…NKGYKTNNDA (206 aa)) form a CPSase region. L-glutamine contacts are provided by serine 60, glycine 258, and glycine 260. Positions 210–398 (HIVAIDYGIK…FNLIMDYKKT (189 aa)) constitute a Glutamine amidotransferase type-1 domain. Cysteine 287 acts as the Nucleophile in catalysis. L-glutamine is bound by residues leucine 288, glutamine 291, asparagine 329, glycine 331, and phenylalanine 332. Active-site residues include histidine 371 and glutamate 373.

It belongs to the CarA family. In terms of assembly, composed of two chains; the small (or glutamine) chain promotes the hydrolysis of glutamine to ammonia, which is used by the large (or ammonia) chain to synthesize carbamoyl phosphate. Tetramer of heterodimers (alpha,beta)4.

The catalysed reaction is hydrogencarbonate + L-glutamine + 2 ATP + H2O = carbamoyl phosphate + L-glutamate + 2 ADP + phosphate + 2 H(+). It carries out the reaction L-glutamine + H2O = L-glutamate + NH4(+). It functions in the pathway amino-acid biosynthesis; L-arginine biosynthesis; carbamoyl phosphate from bicarbonate: step 1/1. The protein operates within pyrimidine metabolism; UMP biosynthesis via de novo pathway; (S)-dihydroorotate from bicarbonate: step 1/3. In terms of biological role, small subunit of the glutamine-dependent carbamoyl phosphate synthetase (CPSase). CPSase catalyzes the formation of carbamoyl phosphate from the ammonia moiety of glutamine, carbonate, and phosphate donated by ATP, constituting the first step of 2 biosynthetic pathways, one leading to arginine and/or urea and the other to pyrimidine nucleotides. The small subunit (glutamine amidotransferase) binds and cleaves glutamine to supply the large subunit with the substrate ammonia. The sequence is that of Carbamoyl phosphate synthase small chain from Bartonella henselae (strain ATCC 49882 / DSM 28221 / CCUG 30454 / Houston 1) (Rochalimaea henselae).